We begin with the raw amino-acid sequence, 186 residues long: ATP synthase subunit delta (186 aa).

It belongs to the ATPase delta chain family. In terms of assembly, F-type ATPases have 2 components, F(1) - the catalytic core - and F(0) - the membrane proton channel. F(1) has five subunits: alpha(3), beta(3), gamma(1), delta(1), epsilon(1). F(0) has three main subunits: a(1), b(2) and c(10-14). The alpha and beta chains form an alternating ring which encloses part of the gamma chain. F(1) is attached to F(0) by a central stalk formed by the gamma and epsilon chains, while a peripheral stalk is formed by the delta and b chains.

It localises to the cell inner membrane. F(1)F(0) ATP synthase produces ATP from ADP in the presence of a proton or sodium gradient. F-type ATPases consist of two structural domains, F(1) containing the extramembraneous catalytic core and F(0) containing the membrane proton channel, linked together by a central stalk and a peripheral stalk. During catalysis, ATP synthesis in the catalytic domain of F(1) is coupled via a rotary mechanism of the central stalk subunits to proton translocation. Functionally, this protein is part of the stalk that links CF(0) to CF(1). It either transmits conformational changes from CF(0) to CF(1) or is implicated in proton conduction. This is ATP synthase subunit delta from Brucella suis biovar 1 (strain 1330).